The following is a 148-amino-acid chain: Large ribosomal subunit protein bL9 (148 aa).

The protein belongs to the bacterial ribosomal protein bL9 family.

In terms of biological role, binds to the 23S rRNA. The protein is Large ribosomal subunit protein bL9 of Staphylococcus saprophyticus subsp. saprophyticus (strain ATCC 15305 / DSM 20229 / NCIMB 8711 / NCTC 7292 / S-41).